A 204-amino-acid polypeptide reads, in one-letter code: Small ribosomal subunit protein uS4 (204 aa).

One can recognise an S4 RNA-binding domain in the interval 92-156 (RRLDALVLRS…SKVPFQVARE (65 aa)).

Belongs to the universal ribosomal protein uS4 family. Part of the 30S ribosomal subunit. Contacts protein S5. The interaction surface between S4 and S5 is involved in control of translational fidelity.

Functionally, one of the primary rRNA binding proteins, it binds directly to 16S rRNA where it nucleates assembly of the body of the 30S subunit. In terms of biological role, with S5 and S12 plays an important role in translational accuracy. The sequence is that of Small ribosomal subunit protein uS4 from Streptomyces griseus subsp. griseus (strain JCM 4626 / CBS 651.72 / NBRC 13350 / KCC S-0626 / ISP 5235).